The primary structure comprises 320 residues: tRNA U34 carboxymethyltransferase (320 aa).

Residues lysine 89, tryptophan 103, lysine 108, glycine 128, 150–152, 179–180, methionine 194, tyrosine 198, and arginine 313 contribute to the carboxy-S-adenosyl-L-methionine site; these read DPT and IE.

This sequence belongs to the class I-like SAM-binding methyltransferase superfamily. CmoB family. As to quaternary structure, homotetramer.

The enzyme catalyses carboxy-S-adenosyl-L-methionine + 5-hydroxyuridine(34) in tRNA = 5-carboxymethoxyuridine(34) in tRNA + S-adenosyl-L-homocysteine + H(+). In terms of biological role, catalyzes carboxymethyl transfer from carboxy-S-adenosyl-L-methionine (Cx-SAM) to 5-hydroxyuridine (ho5U) to form 5-carboxymethoxyuridine (cmo5U) at position 34 in tRNAs. This chain is tRNA U34 carboxymethyltransferase, found in Actinobacillus pleuropneumoniae serotype 7 (strain AP76).